The chain runs to 112 residues: uncharacterized protein (112 aa).

Residues 1–21 (MYLSAQLMRTVTASHLTLRAL) constitute a mitochondrion transit peptide.

The protein resides in the mitochondrion. This is an uncharacterized protein from Saccharomyces cerevisiae (strain ATCC 204508 / S288c) (Baker's yeast).